Reading from the N-terminus, the 448-residue chain is Nucleoprotein (448 aa).

The disordered stretch occupies residues Met1–Ser55. Positions Ser9–Gly22 are enriched in low complexity. Polar residues-rich tracts occupy residues Gln29–Thr38 and Pro45–Ser55. The interval Gln52–Ser194 is RNA-binding. The region spanning Pro61–Gly190 is the CoV N NTD domain. Residues Arg106, Arg122, and Arg164 each coordinate RNA. Disordered stretches follow at residues Thr157 to Asp231, Ile266 to Gly298, and Gly385 to Ile448. Ser167 is modified (phosphoserine; by host). Thr174 is subject to Phosphothreonine; by host. Residue Ser191 is modified to Phosphoserine; by host. The span at Arg193–Arg214 shows a compositional bias: low complexity. The region spanning Ala259–Asp384 is the CoV N CTD domain. The segment covering Ile266–Pro276 has biased composition (basic residues). Residues Ile266–Asp384 are dimerization. Ser390 bears the Phosphoserine; by host mark. The segment covering Gln399–Ile409 has biased composition (polar residues). Residues Lys422–Glu439 are compositionally biased toward basic and acidic residues. Ser423 bears the Phosphoserine; by host mark. Thr427 bears the Phosphothreonine; by host mark.

This sequence belongs to the betacoronavirus nucleocapsid protein family. In terms of assembly, homooligomer. Both monomeric and oligomeric forms interact with RNA. Interacts with protein M. Interacts with NSP3; this interaction serves to tether the genome to the newly translated replicase-transcriptase complex at a very early stage of infection. Post-translationally, ADP-ribosylated. The ADP-ribosylation is retained in the virion during infection. Phosphorylated on serine and threonine residues.

The protein localises to the virion. Its subcellular location is the host endoplasmic reticulum-Golgi intermediate compartment. It localises to the host Golgi apparatus. Functionally, packages the positive strand viral genome RNA into a helical ribonucleocapsid (RNP) and plays a fundamental role during virion assembly through its interactions with the viral genome and membrane protein M. Plays an important role in enhancing the efficiency of subgenomic viral RNA transcription as well as viral replication. The chain is Nucleoprotein from Bovine coronavirus (strain LY-138) (BCoV).